Reading from the N-terminus, the 312-residue chain is Olfactory receptor-like protein COR2 (312 aa).

Residues 1–26 are Extracellular-facing; it reads MASGNCTTPTTFILSGLTDNPRLQMP. A glycan (N-linked (GlcNAc...) asparagine) is linked at asparagine 5. Residues 27–49 form a helical membrane-spanning segment; the sequence is LFMVFLVIYTTTLLTNLGLIALI. Residues 50 to 57 lie on the Cytoplasmic side of the membrane; the sequence is GMDLHLQT. The chain crosses the membrane as a helical span at residues 58 to 79; sequence PMYIFLQNLSFTDAAYSTVITP. Over 80–100 the chain is Extracellular; sequence KMLATFLEERRTISYVGCILQ. Cysteine 97 and cysteine 179 are disulfide-bonded. Residues 101-120 form a helical membrane-spanning segment; sequence YFSFVLLTTSEWLLLAVMAY. Over 121–139 the chain is Cytoplasmic; sequence DRYVAICKPLLYPSIMTKA. Residues 140–164 form a helical membrane-spanning segment; it reads VCWRLVKGLYSLAFLNSLVHTSGLL. Residues 165 to 205 are Extracellular-facing; it reads KLSFCSSNVVNHFFCDNRPLFQISSSSTTLNELLVIISGSL. Residues 206 to 226 form a helical membrane-spanning segment; that stretch reads FVMSSIITILISYVFIILTVV. Residues 227-239 are Cytoplasmic-facing; sequence MIRSKDGKYKAFS. The helical transmembrane segment at 240–260 threads the bilayer; it reads TCTSHLMAVSLFHGTVIFMYL. Residues 261 to 271 are Extracellular-facing; it reads RSVKLFSLDTD. Residues 272–292 form a helical membrane-spanning segment; it reads KIASLFYTVVIPMLNPLIYSW. Residues 293-312 are Cytoplasmic-facing; the sequence is RNKEVKDALRRLTATSVWLH.

It belongs to the G-protein coupled receptor 1 family.

It localises to the cell membrane. In terms of biological role, odorant receptor. The protein is Olfactory receptor-like protein COR2 (COR2) of Gallus gallus (Chicken).